The chain runs to 29 residues: Small toxic protein ZorP (29 aa).

A helical transmembrane segment spans residues 10-27 (VLIAVLELLVALLRLIDL).

The protein localises to the membrane. In terms of biological role, toxic component of a type I toxin-antitoxin (TA) system. Overexpression leads to cell stasis and a decrease in colony-forming units. Probably repressed by cognate small RNA orzP. Base pairing occurs between 18 bases in the 5' UTR of zorP mRNA and the 5' end of OrzP sRNA. The chain is Small toxic protein ZorP from Escherichia coli O157:H7.